Consider the following 274-residue polypeptide: 3-methyl-2-oxobutanoate hydroxymethyltransferase (274 aa).

Mg(2+)-binding residues include Asp49 and Asp88. Residues 49 to 50 (DS), Asp88, and Lys118 contribute to the 3-methyl-2-oxobutanoate site. Glu120 is a binding site for Mg(2+). The active-site Proton acceptor is the Glu187.

This sequence belongs to the PanB family. As to quaternary structure, homodecamer; pentamer of dimers. The cofactor is Mg(2+).

The protein localises to the cytoplasm. It carries out the reaction 3-methyl-2-oxobutanoate + (6R)-5,10-methylene-5,6,7,8-tetrahydrofolate + H2O = 2-dehydropantoate + (6S)-5,6,7,8-tetrahydrofolate. It participates in cofactor biosynthesis; (R)-pantothenate biosynthesis; (R)-pantoate from 3-methyl-2-oxobutanoate: step 1/2. In terms of biological role, catalyzes the reversible reaction in which hydroxymethyl group from 5,10-methylenetetrahydrofolate is transferred onto alpha-ketoisovalerate to form ketopantoate. The protein is 3-methyl-2-oxobutanoate hydroxymethyltransferase of Rhodopseudomonas palustris (strain TIE-1).